Consider the following 186-residue polypeptide: Large ribosomal subunit protein uL6 (186 aa).

Belongs to the universal ribosomal protein uL6 family. As to quaternary structure, part of the 50S ribosomal subunit.

Its function is as follows. This protein binds to the 23S rRNA, and is important in its secondary structure. It is located near the subunit interface in the base of the L7/L12 stalk, and near the tRNA binding site of the peptidyltransferase center. The protein is Large ribosomal subunit protein uL6 of Hyperthermus butylicus (strain DSM 5456 / JCM 9403 / PLM1-5).